A 449-amino-acid polypeptide reads, in one-letter code: Trigger factor (449 aa).

The region spanning 172–257 (GDEVRFDFKG…IKEITNVKPQ (86 aa)) is the PPIase FKBP-type domain.

This sequence belongs to the FKBP-type PPIase family. Tig subfamily.

The protein resides in the cytoplasm. The catalysed reaction is [protein]-peptidylproline (omega=180) = [protein]-peptidylproline (omega=0). Functionally, involved in protein export. Acts as a chaperone by maintaining the newly synthesized protein in an open conformation. Functions as a peptidyl-prolyl cis-trans isomerase. This chain is Trigger factor, found in Ureaplasma parvum serovar 3 (strain ATCC 27815 / 27 / NCTC 11736).